Here is a 182-residue protein sequence, read N- to C-terminus: Lipoprotein signal peptidase (182 aa).

4 helical membrane-spanning segments follow: residues 12-32 (FLWISALAFILDQWSKYTVID), 40-60 (IQVLPFFNFTYVHNYGAAFSF), 70-90 (WFFTAIAVVVSVVILWWLKQS), and 97-117 (LPVAFAFILGGALGNVYDRLV). Catalysis depends on residues Asp-123 and Asp-141. The helical transmembrane segment at 136–156 (AFNIADSAIFIGAALLIIDMF) threads the bilayer. Positions 161-182 (KKSEENGAESKAGSANSSETIK) are disordered. Residues 173–182 (GSANSSETIK) are compositionally biased toward polar residues.

Belongs to the peptidase A8 family.

It is found in the cell inner membrane. It catalyses the reaction Release of signal peptides from bacterial membrane prolipoproteins. Hydrolyzes -Xaa-Yaa-Zaa-|-(S,diacylglyceryl)Cys-, in which Xaa is hydrophobic (preferably Leu), and Yaa (Ala or Ser) and Zaa (Gly or Ala) have small, neutral side chains.. The protein operates within protein modification; lipoprotein biosynthesis (signal peptide cleavage). In terms of biological role, this protein specifically catalyzes the removal of signal peptides from prolipoproteins. This chain is Lipoprotein signal peptidase, found in Alteromonas mediterranea (strain DSM 17117 / CIP 110805 / LMG 28347 / Deep ecotype).